Here is an 89-residue protein sequence, read N- to C-terminus: uncharacterized protein (89 aa).

The next 2 membrane-spanning stretches (helical) occupy residues 1–21 (MFLA…ISLI) and 28–48 (GISL…TIAA).

It is found in the cell membrane. This is an uncharacterized protein from Methanocaldococcus jannaschii (strain ATCC 43067 / DSM 2661 / JAL-1 / JCM 10045 / NBRC 100440) (Methanococcus jannaschii).